The following is a 112-amino-acid chain: Nitrogen regulatory protein P-II (112 aa).

Tyrosine 51 carries the O-UMP-tyrosine modification.

It belongs to the P(II) protein family. In terms of assembly, homotrimer.

The protein resides in the plastid. It localises to the chloroplast. Functionally, P-II indirectly controls the transcription of the glutamine synthetase gene (glnA). P-II prevents NR-II-catalyzed conversion of NR-I to NR-I-phosphate, the transcriptional activator of glnA. When P-II is uridylylated to P-II-UMP, these events are reversed. When the ratio of Gln to 2-ketoglutarate decreases, P-II is uridylylated to P-II-UMP, which causes the deadenylation of glutamine synthetase, so activating the enzyme. The chain is Nitrogen regulatory protein P-II (glnB) from Pyropia yezoensis (Susabi-nori).